The chain runs to 329 residues: Sorting assembly machinery 35 kDa subunit (329 aa).

As to quaternary structure, component of the mitochondrial outer membrane sorting assembly machinery (SAM or TOB) complex, which at least consists of SAM35, SAM37 and SAM50.

It localises to the mitochondrion outer membrane. Its function is as follows. Essential component of the mitochondrial outer membrane sorting assembly machinery (SAM or TOB) complex, which is required for the sorting of proteins with complicated topology, such as beta-barrel proteins, to the mitochondrial outer membrane after import by the TOM complex. This is Sorting assembly machinery 35 kDa subunit (SAM35) from Saccharomyces cerevisiae (strain ATCC 204508 / S288c) (Baker's yeast).